The primary structure comprises 631 residues: 1-deoxy-D-xylulose-5-phosphate synthase (631 aa).

Thiamine diphosphate-binding positions include His87 and 128-130; that span reads GHS. Residue Asp159 coordinates Mg(2+). Residues 160–161, Asn188, Phe295, and Glu377 contribute to the thiamine diphosphate site; that span reads GA. Position 188 (Asn188) interacts with Mg(2+).

This sequence belongs to the transketolase family. DXPS subfamily. In terms of assembly, homodimer. Mg(2+) serves as cofactor. The cofactor is thiamine diphosphate.

It catalyses the reaction D-glyceraldehyde 3-phosphate + pyruvate + H(+) = 1-deoxy-D-xylulose 5-phosphate + CO2. Its pathway is metabolic intermediate biosynthesis; 1-deoxy-D-xylulose 5-phosphate biosynthesis; 1-deoxy-D-xylulose 5-phosphate from D-glyceraldehyde 3-phosphate and pyruvate: step 1/1. In terms of biological role, catalyzes the acyloin condensation reaction between C atoms 2 and 3 of pyruvate and glyceraldehyde 3-phosphate to yield 1-deoxy-D-xylulose-5-phosphate (DXP). The polypeptide is 1-deoxy-D-xylulose-5-phosphate synthase (Pseudomonas putida (strain W619)).